Reading from the N-terminus, the 432-residue chain is Enolase (432 aa).

Q167 is a (2R)-2-phosphoglycerate binding site. E209 (proton donor) is an active-site residue. Mg(2+) is bound by residues D246, E290, and D317. Positions 342, 371, 372, and 393 each coordinate (2R)-2-phosphoglycerate. The active-site Proton acceptor is K342.

Belongs to the enolase family. As to quaternary structure, component of the RNA degradosome, a multiprotein complex involved in RNA processing and mRNA degradation. Mg(2+) is required as a cofactor.

It is found in the cytoplasm. It localises to the secreted. The protein localises to the cell surface. The catalysed reaction is (2R)-2-phosphoglycerate = phosphoenolpyruvate + H2O. It participates in carbohydrate degradation; glycolysis; pyruvate from D-glyceraldehyde 3-phosphate: step 4/5. Catalyzes the reversible conversion of 2-phosphoglycerate (2-PG) into phosphoenolpyruvate (PEP). It is essential for the degradation of carbohydrates via glycolysis. This Salmonella agona (strain SL483) protein is Enolase.